The chain runs to 148 residues: MSEIKRLEINYKTDELFENFRAFGNKDLYMVNELNGQMIDASSDSPFYGIFVGDQLGARMALLKKGDVEEIYFPDFEDYILLWKLEVLPKYQNRGYASELIDFAKSFNMPIKAIGRNDSKDFFLHHGFTDVEAKNIEGHDVLLWKPIR.

An N-acetyltransferase domain is found at 7–148; the sequence is LEINYKTDEL…HDVLLWKPIR (142 aa).

This is an uncharacterized protein from Staphylococcus aureus (strain Mu50 / ATCC 700699).